We begin with the raw amino-acid sequence, 164 residues long: Ribosome maturation factor RimP (164 aa).

The protein belongs to the RimP family.

The protein resides in the cytoplasm. Required for maturation of 30S ribosomal subunits. The chain is Ribosome maturation factor RimP from Mesoplasma florum (strain ATCC 33453 / NBRC 100688 / NCTC 11704 / L1) (Acholeplasma florum).